The primary structure comprises 177 residues: MGTETATLGGGCFWCTEAAMEELAGVTDVTSGYAGGDTADPSYRDVCSGTTGHAEVVQVEYDTAELAYEDVLEVFFTVHDPTTVDREGPDVGSQYRSIVLPHDDQQHERATAFVDELAAADAFDGSIVTEIEPLETFYPAAEKHQNYFEKNPDAAYCTVNVAPKVSKVREQFGARTE.

Cysteine 12 is an active-site residue.

It belongs to the MsrA Met sulfoxide reductase family.

It carries out the reaction L-methionyl-[protein] + [thioredoxin]-disulfide + H2O = L-methionyl-(S)-S-oxide-[protein] + [thioredoxin]-dithiol. The enzyme catalyses [thioredoxin]-disulfide + L-methionine + H2O = L-methionine (S)-S-oxide + [thioredoxin]-dithiol. Its function is as follows. Has an important function as a repair enzyme for proteins that have been inactivated by oxidation. Catalyzes the reversible oxidation-reduction of methionine sulfoxide in proteins to methionine. This chain is Peptide methionine sulfoxide reductase MsrA, found in Halobacterium salinarum (strain ATCC 29341 / DSM 671 / R1).